The chain runs to 225 residues: Cytidylate kinase (225 aa).

11-19 (GPAGVGKST) lines the ATP pocket.

This sequence belongs to the cytidylate kinase family. Type 1 subfamily.

It localises to the cytoplasm. The catalysed reaction is CMP + ATP = CDP + ADP. It carries out the reaction dCMP + ATP = dCDP + ADP. The sequence is that of Cytidylate kinase from Lawsonia intracellularis (strain PHE/MN1-00).